A 186-amino-acid polypeptide reads, in one-letter code: MARLRRWHCYRKLEVPYTRVSRSKNKNYIPGAKPTMVRLFHMGELTRNPSEWQYEASLVAKENHQIRDNAIEAIRVMVNKYLESTLGKKRYLFIIRKYPHHIYREKPVVGGYAGADRISQGMRLSFGRPKGRAVQIYEGEKLLSIFFDDITKAKDIKYFLQVARSKLPWRYREEIVEVKSGKPLAL.

The protein belongs to the universal ribosomal protein uL16 family.

In Nanoarchaeum equitans (strain Kin4-M), this protein is Large ribosomal subunit protein uL16.